The chain runs to 398 residues: Phosphoglycerate kinase (398 aa).

Substrate is bound by residues 23–25 (DFN), arginine 38, 61–64 (HMGK), arginine 122, and arginine 155. ATP-binding positions include lysine 206, glycine 297, glutamate 328, and 354–357 (GGDS).

This sequence belongs to the phosphoglycerate kinase family. Monomer.

It localises to the cytoplasm. It catalyses the reaction (2R)-3-phosphoglycerate + ATP = (2R)-3-phospho-glyceroyl phosphate + ADP. It functions in the pathway carbohydrate degradation; glycolysis; pyruvate from D-glyceraldehyde 3-phosphate: step 2/5. This Clostridium botulinum (strain 657 / Type Ba4) protein is Phosphoglycerate kinase.